Consider the following 147-residue polypeptide: Large ribosomal subunit protein uL11 (147 aa).

It belongs to the universal ribosomal protein uL11 family. As to quaternary structure, part of the ribosomal stalk of the 50S ribosomal subunit. Interacts with L10 and the large rRNA to form the base of the stalk. L10 forms an elongated spine to which L12 dimers bind in a sequential fashion forming a multimeric L10(L12)X complex. One or more lysine residues are methylated.

In terms of biological role, forms part of the ribosomal stalk which helps the ribosome interact with GTP-bound translation factors. The sequence is that of Large ribosomal subunit protein uL11 from Thermus thermophilus (strain ATCC BAA-163 / DSM 7039 / HB27).